The primary structure comprises 727 residues: Polyribonucleotide nucleotidyltransferase (727 aa).

Asp491 and Asp497 together coordinate Mg(2+). A KH domain is found at 558–617 (PRIITASIHPDKIREVIGPGGKTIKKIIDETGVKIDIEDDGRVFISAVDGEAGENALKII). One can recognise an S1 motif domain in the interval 627-701 (GRIYNGRVTR…KQGRLNLSRK (75 aa)). The interval 698–727 (LSRKEALPNPNPSSNPNPNGITANRNPRNS) is disordered. Over residues 717 to 727 (GITANRNPRNS) the composition is skewed to polar residues.

The protein belongs to the polyribonucleotide nucleotidyltransferase family. Mg(2+) serves as cofactor.

The protein localises to the cytoplasm. The catalysed reaction is RNA(n+1) + phosphate = RNA(n) + a ribonucleoside 5'-diphosphate. Involved in mRNA degradation. Catalyzes the phosphorolysis of single-stranded polyribonucleotides processively in the 3'- to 5'-direction. The protein is Polyribonucleotide nucleotidyltransferase of Desulfitobacterium hafniense (strain Y51).